The primary structure comprises 78 residues: Major outer membrane lipoprotein Lpp (78 aa).

Residues 1–20 form the signal peptide; it reads MNRTKLVLGAVILGSTLLAG. The N-palmitoyl cysteine moiety is linked to residue Cys-21. Cys-21 is lipidated: S-diacylglycerol cysteine. Residues 22-75 are a coiled coil; it reads SSNAKIDQLSTDVQTLNAKVDQLSNDVTAIRSDVQAAKDDAARANQRLDNQAHS. 2 consecutive repeats follow at residues 24–34 and 38–48; these read NAKIDQLSTDV and NAKVDQLSNDV. Lys-78 bears the N6-murein peptidoglycan lysine mark.

This sequence belongs to the Lpp family. In terms of assembly, homotrimer.

Its subcellular location is the cell outer membrane. It localises to the secreted. The protein resides in the cell wall. In terms of biological role, a highly abundant outer membrane lipoprotein that controls the distance between the inner and outer membranes. The only protein known to be covalently linked to the peptidoglycan network (PGN). Also non-covalently binds the PGN. The link between the cell outer membrane and PGN contributes to maintenance of the structural and functional integrity of the cell envelope, and maintains the correct distance between the PGN and the outer membrane. The chain is Major outer membrane lipoprotein Lpp from Erwinia amylovora (Fire blight bacteria).